The primary structure comprises 109 residues: Polyprenyl transferase subC (109 aa).

2 helical membrane-spanning segments follow: residues L39–I59 and Q84–L104.

Belongs to the UbiA prenyltransferase family. The cofactor is Mg(2+).

It localises to the membrane. It participates in secondary metabolite biosynthesis; terpenoid biosynthesis. In terms of biological role, polyprenyl transferase; part of the gene cluster that mediates the biosynthesis of the immunosuppressants subglutinols, meroterpenoids consisting of an alpha-pyrone (4-hydroxy-5,6-dimethyl-2-pyrone) moiety attached to a decalin core fused to a five-membered cyclic ether carrying a prenylside chain. The first step of the pathway is the synthesis of the alpha-pyrone moiety by the polyketide synthase subA via condensation of one acetyl-CoA starter unit with 3 malonyl-CoA units and 2 methylations. The alpha-pyrone is then combined with geranylgeranyl pyrophosphate (GGPP) formed by the GGPP synthase subD through the action of the prenyltransferase subC to yield a linear alpha-pyrone diterpenoid. Subsequent steps in the subglutinol biosynthetic pathway involve the decalin core formation, which is thought to be initiated by the epoxidation of the C10-C11 olefin by the FAD-dependent oxidoreductase subE. The following cyclization cascade would be catalyzed by the terpene cyclase subB. Lastly, the FAD-dependent dehydrogenase subF probably catalyzes the five-membered cyclic ether formation to complete the formation of subglutinol A. Subsequent redox reactions appear to give rise to subglutinol C and D, however, it remains unclear which enzymes are responsible for these transformations. SubD may have secondary function in the conversion of the identified subglutinols to subglutinol analog 45, which seems to be the major product of the cluster. The polypeptide is Polyprenyl transferase subC (Metarhizium robertsii (strain ARSEF 23 / ATCC MYA-3075) (Metarhizium anisopliae (strain ARSEF 23))).